We begin with the raw amino-acid sequence, 160 residues long: Ubiquitin-like protein ATG12 (160 aa).

Positions 1–40 are disordered; sequence MSETPKDQGPSSPSPSPSPSAASPMPLADNEVAGSGASSP. A Glycyl lysine isopeptide (Gly-Lys) (interchain with K-102 in ATG5) cross-link involves residue glycine 160.

It belongs to the ATG12 family. Forms a conjugate with ATG5. Forms a thioester bond with the 'Cys-196' of ATG10. Interacts with the ATG7 C-terminal 40 amino acids domain. The ATG12-ATG5 conjugate forms a complex with several units of ATG16. The ATG12-ATG5 conjugate also associates with ATG3.

It localises to the preautophagosomal structure membrane. Functionally, ubiquitin-like protein involved in cytoplasm to vacuole transport (Cvt), autophagy vesicles formation, mitophagy, and nucleophagy. Conjugation with ATG5 through a ubiquitin-like conjugating system involving also ATG7 as an E1-like activating enzyme and ATG10 as an E2-like conjugating enzyme, is essential for its function. The ATG12-ATG5 conjugate acts as an E3-like enzyme which is required for lipidation of ATG8 and ATG8 association to the vesicle membranes. ATG12-ATG5 rearranges the ATG3 catalytic center and enhances its E2 activity. Autophagy is required for proper vegetative growth, asexual/sexual reproduction, and full virulence. Autophagy is particularly involved in the biosynthesis of deoxynivalenol (DON), an important virulence determinant. The chain is Ubiquitin-like protein ATG12 from Gibberella zeae (strain ATCC MYA-4620 / CBS 123657 / FGSC 9075 / NRRL 31084 / PH-1) (Wheat head blight fungus).